A 162-amino-acid chain; its full sequence is NADH-quinone oxidoreductase subunit I (162 aa).

4Fe-4S ferredoxin-type domains follow at residues Arg54 to Glu83 and Thr93 to Ile122. Cys63, Cys66, Cys69, Cys73, Cys102, Cys105, Cys108, and Cys112 together coordinate [4Fe-4S] cluster.

The protein belongs to the complex I 23 kDa subunit family. NDH-1 is composed of 14 different subunits. Subunits NuoA, H, J, K, L, M, N constitute the membrane sector of the complex. [4Fe-4S] cluster serves as cofactor.

It localises to the cell inner membrane. It carries out the reaction a quinone + NADH + 5 H(+)(in) = a quinol + NAD(+) + 4 H(+)(out). NDH-1 shuttles electrons from NADH, via FMN and iron-sulfur (Fe-S) centers, to quinones in the respiratory chain. The immediate electron acceptor for the enzyme in this species is believed to be ubiquinone. Couples the redox reaction to proton translocation (for every two electrons transferred, four hydrogen ions are translocated across the cytoplasmic membrane), and thus conserves the redox energy in a proton gradient. The protein is NADH-quinone oxidoreductase subunit I of Burkholderia cenocepacia (strain HI2424).